A 370-amino-acid chain; its full sequence is Chloromuconate cycloisomerase (370 aa).

Residue lysine 165 is the Proton acceptor of the active site. Residues aspartate 194, glutamate 220, and aspartate 245 each contribute to the Mn(2+) site. Glutamate 323 (proton donor) is an active-site residue.

Belongs to the mandelate racemase/muconate lactonizing enzyme family. It depends on Mn(2+) as a cofactor.

The enzyme catalyses 2-[(2R)-2-chloro-2,5-dihydro-5-oxofuryl]acetate = 3-chloro-cis,cis-muconate + H(+). It functions in the pathway aromatic compound metabolism; 3-chlorocatechol degradation. The protein is Chloromuconate cycloisomerase (tfdDI) of Cupriavidus pinatubonensis (strain JMP 134 / LMG 1197) (Cupriavidus necator (strain JMP 134)).